Here is a 532-residue protein sequence, read N- to C-terminus: 2,3-bisphosphoglycerate-independent phosphoglycerate mutase (532 aa).

Asp-15 and Ser-65 together coordinate Mn(2+). Ser-65 (phosphoserine intermediate) is an active-site residue. Substrate contacts are provided by residues His-126, 156 to 157, Arg-188, Arg-194, 258 to 261, and Lys-331; these read RD and RPDR. Mn(2+) contacts are provided by Asp-398, His-402, Asp-439, His-440, and His-457.

The protein belongs to the BPG-independent phosphoglycerate mutase family. In terms of assembly, monomer. The cofactor is Mn(2+).

The catalysed reaction is (2R)-2-phosphoglycerate = (2R)-3-phosphoglycerate. The protein operates within carbohydrate degradation; glycolysis; pyruvate from D-glyceraldehyde 3-phosphate: step 3/5. Its function is as follows. Catalyzes the interconversion of 2-phosphoglycerate and 3-phosphoglycerate. The sequence is that of 2,3-bisphosphoglycerate-independent phosphoglycerate mutase from Synechocystis sp. (strain ATCC 27184 / PCC 6803 / Kazusa).